Here is an 885-residue protein sequence, read N- to C-terminus: DDT domain-containing protein DDB_G0282237 (885 aa).

Residues 20 to 125 form the WAC domain; sequence EEYFVIKFTK…GEIVSFKKAN (106 aa). Disordered stretches follow at residues 141 to 184, 201 to 264, and 367 to 431; these read ESDE…INAL, DDEN…SVRK, and LEDT…KENE. The segment covering 154–180 has biased composition (low complexity); sequence SSSSSSTTTTTTTPTTPPTTTTTTSSS. Over residues 210–264 the composition is skewed to basic and acidic residues; that stretch reads KNNGDTSSDKKGEKEKEKEKEKEKEKEKEKEKEKEKEKEKEKEKEKDSDTKSVRK. Residues 217 to 260 are a coiled coil; that stretch reads SDKKGEKEKEKEKEKEKEKEKEKEKEKEKEKEKEKEKEKDSDTK. The segment covering 367 to 379 has biased composition (acidic residues); the sequence is LEDTEEESVDIES. A compositionally biased stretch (low complexity) spans 380-396; that stretch reads NDNSNSNGNSNSNNNLD. One can recognise a DDT domain in the interval 443–503; sequence SNTFGDFLMV…MKTIFTLPSY (61 aa). Residues 530–565 adopt a coiled-coil conformation; the sequence is FQNEVKRIAIEEKEKQEKLKQLEEQNIRMLNLANEL. Disordered regions lie at residues 562–632 and 707–744; these read ANEL…WKEE and KQDD…QKKP. Over residues 567–577 the composition is skewed to acidic residues; it reads GSDDEDDEMKL. Over residues 578-603 the composition is skewed to basic and acidic residues; it reads DEDGNEIKKDVEMKDNDGTKDTKKDD. Coiled-coil stretches lie at residues 593-628 and 674-782; these read NDGT…GEEE and ASEK…RDRN. Composition is skewed to acidic residues over residues 604–631 and 715–729; these read EENE…EWKE and AEDD…EEQQ.

Its subcellular location is the nucleus. The chain is DDT domain-containing protein DDB_G0282237 from Dictyostelium discoideum (Social amoeba).